The chain runs to 72 residues: Translation initiation factor IF-1 (72 aa).

The 72-residue stretch at 1 to 72 (MAKDDVIQMQ…SRARIVFRAK (72 aa)) folds into the S1-like domain.

The protein belongs to the IF-1 family. Component of the 30S ribosomal translation pre-initiation complex which assembles on the 30S ribosome in the order IF-2 and IF-3, IF-1 and N-formylmethionyl-tRNA(fMet); mRNA recruitment can occur at any time during PIC assembly.

The protein localises to the cytoplasm. One of the essential components for the initiation of protein synthesis. Stabilizes the binding of IF-2 and IF-3 on the 30S subunit to which N-formylmethionyl-tRNA(fMet) subsequently binds. Helps modulate mRNA selection, yielding the 30S pre-initiation complex (PIC). Upon addition of the 50S ribosomal subunit IF-1, IF-2 and IF-3 are released leaving the mature 70S translation initiation complex. The chain is Translation initiation factor IF-1 from Burkholderia thailandensis (strain ATCC 700388 / DSM 13276 / CCUG 48851 / CIP 106301 / E264).